A 375-amino-acid polypeptide reads, in one-letter code: Delta(12) fatty acid dehydrogenase (375 aa).

A run of 2 helical transmembrane segments spans residues 54-74 and 77-97; these read IIAYIFYFLADKYIPILPAPL and LAWPLYWFCQASILTGLWVIG. The Histidine box-1 signature appears at 98–102; the sequence is HECGH. The helical transmembrane segment at 110–130 threads the bilayer; sequence WVDDTVGFILHSFLMTPYFSW. Residues 134-138 carry the Histidine box-2 motif; sequence HRNHH. The next 3 membrane-spanning stretches (helical) occupy residues 172-192, 218-238, and 242-262; these read LLIMFITFTLGFPLYLFTNIS, VLLSDLGLLAVLYGVKLAVAA, and AWVTCIYGIPVLGVFIFFDII. Residues 308–312 carry the Histidine box-3 motif; sequence HVMHH.

It belongs to the fatty acid desaturase type 1 family. Fe cation serves as cofactor. As to expression, seed.

The protein localises to the membrane. It catalyses the reaction a (9Z,12Z)-octadecadienoyl-containing glycerolipid + 2 Fe(II)-[cytochrome b5] + O2 + 2 H(+) = a (9Z)-octadec-9-en-12-ynoyl-containing glycerolipid + 2 Fe(III)-[cytochrome b5] + 2 H2O. The protein operates within lipid metabolism; polyunsaturated fatty acid biosynthesis. Its function is as follows. Changes the delta-12 double bond of linoleic acid into a triple bond in the biosynthesis of crepenynic acid. The chain is Delta(12) fatty acid dehydrogenase from Crepis alpina (Hawksbeard).